Consider the following 430-residue polypeptide: Drebrin-like protein (430 aa).

Positions 4–133 (NLSRNGPALQ…EPECIMEKVA (130 aa)) constitute an ADF-H domain. Thr26 carries the post-translational modification Phosphothreonine. Gly137 and Ser160 each carry phosphoserine. Lys176 carries the post-translational modification N6-acetyllysine. Residues 176–231 (KDSFWAKAEKEEENRRLEEKRRAEEAQRQLEQERRERELREAARREQRYQEQGGEA) adopt a coiled-coil conformation. Ala183 and Ser232 each carry phosphoserine. Residues 219–283 (RREQRYQEQG…SSPQPGKLRS (65 aa)) are disordered. The segment covering 233–244 (PQRTWEQQQEVV) has biased composition (polar residues). The span at 245–267 (SRNRNEQESAVHPREIFKQKERA) shows a compositional bias: basic and acidic residues. Residues 268 to 277 (MSTTSISSPQ) show a composition bias toward polar residues. 4 positions are modified to phosphoserine: Ser269, Ser272, Ser275, and Ser283. The residue at position 288 (Lys288) is an N6-acetyllysine. Thr291 bears the Phosphothreonine mark. Phosphotyrosine is present on residues Tyr334 and Tyr344. The region spanning 371-430 (GQGLCARALYDYQAADDTEISFDPENLITGIEVIDEGWWRGYGPDGHFGMFPANYVELIE) is the SH3 domain.

The protein belongs to the ABP1 family. In terms of assembly, interacts with SHANK2, SHANK3 and SYN1. Interacts with FGD1 and DNM1. Interacts with ANKRD54. Interacts with COBL. Interacts with WASL and WIPF1. Interacts with MAP4K1 and PRAM1. Degraded by caspases during apoptosis.

It localises to the cytoplasm. The protein resides in the cytoskeleton. Its subcellular location is the cell projection. It is found in the lamellipodium. The protein localises to the ruffle. It localises to the cell cortex. The protein resides in the cytosol. Its subcellular location is the synapse. It is found in the perikaryon. The protein localises to the neuron projection. It localises to the cell membrane. The protein resides in the cytoplasmic vesicle. Its subcellular location is the clathrin-coated vesicle membrane. It is found in the golgi apparatus membrane. The protein localises to the podosome. It localises to the early endosome. The protein resides in the dendrite. Its subcellular location is the postsynaptic density. In terms of biological role, adapter protein that binds F-actin and DNM1, and thereby plays a role in receptor-mediated endocytosis. Plays a role in the reorganization of the actin cytoskeleton, formation of cell projections, such as neurites, in neuron morphogenesis and synapse formation via its interaction with WASL and COBL. Does not bind G-actin and promote actin polymerization by itself. Required for the formation of organized podosome rosettes. May act as a common effector of antigen receptor-signaling pathways in leukocytes. Acts as a key component of the immunological synapse that regulates T-cell activation by bridging TCRs and the actin cytoskeleton to gene activation and endocytic processes. This is Drebrin-like protein (DBNL) from Homo sapiens (Human).